A 215-amino-acid polypeptide reads, in one-letter code: Cytochrome b6 (215 aa).

The helical transmembrane segment at 32–52 (IFYCLGGITLTCFLVQVATGF) threads the bilayer. Position 35 (Cys-35) interacts with heme c. Heme b contacts are provided by His-86 and His-100. The next 3 helical transmembrane spans lie at 90-110 (ASMM…TGGF), 116-136 (LTWV…VTGY), and 186-206 (LHTF…FLMI). Residues His-187 and His-202 each contribute to the heme b site.

The protein belongs to the cytochrome b family. PetB subfamily. In terms of assembly, the 4 large subunits of the cytochrome b6-f complex are cytochrome b6, subunit IV (17 kDa polypeptide, PetD), cytochrome f and the Rieske protein, while the 4 small subunits are PetG, PetL, PetM and PetN. The complex functions as a dimer. Heme b serves as cofactor. Heme c is required as a cofactor.

It localises to the plastid. It is found in the chloroplast thylakoid membrane. Component of the cytochrome b6-f complex, which mediates electron transfer between photosystem II (PSII) and photosystem I (PSI), cyclic electron flow around PSI, and state transitions. The chain is Cytochrome b6 from Pinus koraiensis (Korean pine).